We begin with the raw amino-acid sequence, 190 residues long: Pyridoxal 5'-phosphate synthase subunit PdxT (190 aa).

46 to 48 is a binding site for L-glutamine; sequence GES. Catalysis depends on Cys-78, which acts as the Nucleophile. L-glutamine contacts are provided by residues Arg-108 and 137–138; that span reads IR. Active-site charge relay system residues include His-174 and Glu-176.

The protein belongs to the glutaminase PdxT/SNO family. In the presence of PdxS, forms a dodecamer of heterodimers. Only shows activity in the heterodimer.

The catalysed reaction is aldehydo-D-ribose 5-phosphate + D-glyceraldehyde 3-phosphate + L-glutamine = pyridoxal 5'-phosphate + L-glutamate + phosphate + 3 H2O + H(+). It catalyses the reaction L-glutamine + H2O = L-glutamate + NH4(+). It functions in the pathway cofactor biosynthesis; pyridoxal 5'-phosphate biosynthesis. In terms of biological role, catalyzes the hydrolysis of glutamine to glutamate and ammonia as part of the biosynthesis of pyridoxal 5'-phosphate. The resulting ammonia molecule is channeled to the active site of PdxS. The chain is Pyridoxal 5'-phosphate synthase subunit PdxT from Herpetosiphon aurantiacus (strain ATCC 23779 / DSM 785 / 114-95).